The primary structure comprises 983 residues: Polyhomeotic-like protein 3 (983 aa).

7 disordered regions span residues 1–34 (MDTE…MQQP), 103–149 (LSSG…SSTS), 225–283 (VLSS…TAVT), 313–332 (LHSP…QQQQ), 339–410 (LQNS…SQSP), 477–509 (PGQQ…STSP), and 601–620 (DECV…PAAI). Low complexity-rich tracts occupy residues 9-29 (TSSV…TSSS) and 103-126 (LSSG…SQTS). Positions 127–139 (INLSTSPTPAQLI) are enriched in polar residues. The span at 140–149 (SRSQASSSTS) shows a compositional bias: low complexity. Positions 225–257 (VLSSSQNGPPKSTSQTQSLTICHNKTTVTSSKI) are enriched in polar residues. The span at 258-271 (SQRDPSPESNKKGE) shows a compositional bias: basic and acidic residues. Phosphoserine occurs at positions 263 and 272. Polar residues predominate over residues 274–283 (SLESRSTAVT). Ser315 is modified (phosphoserine). A compositionally biased stretch (polar residues) spans 365 to 383 (SNAQSQHCSPIQSHPSPLT). The span at 384 to 398 (VSPNQSQSAQQSVVV) shows a compositional bias: low complexity. Positions 477–489 (PGQQIVSPSHQQY) are enriched in polar residues. The span at 490 to 506 (SSLQSSPIPIASPPQMS) shows a compositional bias: low complexity. Phosphothreonine is present on residues Thr609 and Thr614. Ser616 bears the Phosphoserine mark. Glycyl lysine isopeptide (Lys-Gly) (interchain with G-Cter in SUMO2) cross-links involve residues Lys691 and Lys732. The short motif at 691 to 720 (KPPQAIVKPQILTHVIEGFVIQEGLEPFPV) is the HD1 element. Phosphoserine is present on residues Ser761 and Ser762. The segment at 776-810 (EEMDSELLKCEFCGKMGYANEFLRSKRFCTMSCAK) adopts an FCS-type zinc-finger fold. 4 residues coordinate Zn(2+): Cys785, Cys788, Cys804, and Cys808. Residue Lys810 forms a Glycyl lysine isopeptide (Lys-Gly) (interchain with G-Cter in SUMO2) linkage. 2 disordered regions span residues 827-847 (RKPD…PDGA) and 864-889 (EEDL…SERE). The SAM domain occupies 919-983 (WTVDDVWAFI…CARINSLKES (65 aa)).

In terms of assembly, component of a PRC1-like complex.

Its subcellular location is the nucleus. Functionally, component of a Polycomb group (PcG) multiprotein PRC1-like complex, a complex class required to maintain the transcriptionally repressive state of many genes, including Hox genes, throughout development. PcG PRC1 complex acts via chromatin remodeling and modification of histones; it mediates monoubiquitination of histone H2A 'Lys-119', rendering chromatin heritably changed in its expressibility. The chain is Polyhomeotic-like protein 3 (PHC3) from Homo sapiens (Human).